A 491-amino-acid chain; its full sequence is ADP-specific phosphofructokinase (491 aa).

An ADPK domain is found at 4-486 (EEWEQRHAEA…FVAMLAKIKQ (483 aa)). Residues E281, E312, and D470 each contribute to the Mg(2+) site. Catalysis depends on D470, which acts as the Proton acceptor.

The protein belongs to the carbohydrate kinase PfkC family. Requires Mg(2+) as cofactor.

The protein localises to the cytoplasm. It carries out the reaction beta-D-fructose 6-phosphate + ADP = beta-D-fructose 1,6-bisphosphate + AMP + H(+). It functions in the pathway carbohydrate degradation; glycolysis. Its function is as follows. Catalyzes the phosphorylation of fructose 6-phosphate to fructose 1,6-bisphosphate using ADP as the phosphate donor. The sequence is that of ADP-specific phosphofructokinase from Methanosarcina acetivorans (strain ATCC 35395 / DSM 2834 / JCM 12185 / C2A).